A 219-amino-acid chain; its full sequence is Large ribosomal subunit protein bL25 (219 aa).

The tract at residues 188 to 219 (TVAAPADTAVQPESSSTKGKKDEDGALAKDKK) is disordered. Residues 206–219 (GKKDEDGALAKDKK) show a composition bias toward basic and acidic residues.

Belongs to the bacterial ribosomal protein bL25 family. CTC subfamily. As to quaternary structure, part of the 50S ribosomal subunit; part of the 5S rRNA/L5/L18/L25 subcomplex. Contacts the 5S rRNA. Binds to the 5S rRNA independently of L5 and L18.

This is one of the proteins that binds to the 5S RNA in the ribosome where it forms part of the central protuberance. This Elusimicrobium minutum (strain Pei191) protein is Large ribosomal subunit protein bL25.